Consider the following 344-residue polypeptide: tRNA N6-adenosine threonylcarbamoyltransferase (344 aa).

Residues His111 and His115 each contribute to the Fe cation site. Substrate contacts are provided by residues 134-138 (LVSGG), Asp167, Gly180, and Asn273. Residue Asp301 participates in Fe cation binding.

This sequence belongs to the KAE1 / TsaD family. The cofactor is Fe(2+).

The protein localises to the cytoplasm. The enzyme catalyses L-threonylcarbamoyladenylate + adenosine(37) in tRNA = N(6)-L-threonylcarbamoyladenosine(37) in tRNA + AMP + H(+). Required for the formation of a threonylcarbamoyl group on adenosine at position 37 (t(6)A37) in tRNAs that read codons beginning with adenine. Is involved in the transfer of the threonylcarbamoyl moiety of threonylcarbamoyl-AMP (TC-AMP) to the N6 group of A37, together with TsaE and TsaB. TsaD likely plays a direct catalytic role in this reaction. The sequence is that of tRNA N6-adenosine threonylcarbamoyltransferase from Cupriavidus pinatubonensis (strain JMP 134 / LMG 1197) (Cupriavidus necator (strain JMP 134)).